Consider the following 288-residue polypeptide: Co-chaperone protein DjlA (288 aa).

The Periplasmic portion of the chain corresponds to 1-6 (MEFIGK). A helical transmembrane segment spans residues 7–30 (IIGVFLGWKVGGFFGAIAGLILGS). The Cytoplasmic portion of the chain corresponds to 31–288 (IADKKLYELG…DLICKAKGWK (258 aa)). The J domain maps to 222 to 288 (DAYKVLGVTE…DLICKAKGWK (67 aa)).

As to quaternary structure, homodimer.

It localises to the cell inner membrane. Regulatory DnaK co-chaperone. Direct interaction between DnaK and DjlA is needed for the induction of the wcaABCDE operon, involved in the synthesis of a colanic acid polysaccharide capsule, possibly through activation of the RcsB/RcsC phosphotransfer signaling pathway. The colanic acid capsule may help the bacterium survive conditions outside the host. This Haemophilus influenzae (strain ATCC 51907 / DSM 11121 / KW20 / Rd) protein is Co-chaperone protein DjlA.